We begin with the raw amino-acid sequence, 159 residues long: Phosphopantetheine adenylyltransferase (159 aa).

T10 contacts substrate. ATP contacts are provided by residues 10-11 (TF) and H18. The substrate site is built by K42, M74, and R88. Residues 89 to 91 (GLR), E99, and 124 to 130 (WSFISSS) contribute to the ATP site.

Belongs to the bacterial CoaD family. Homohexamer. Requires Mg(2+) as cofactor.

It localises to the cytoplasm. It catalyses the reaction (R)-4'-phosphopantetheine + ATP + H(+) = 3'-dephospho-CoA + diphosphate. Its pathway is cofactor biosynthesis; coenzyme A biosynthesis; CoA from (R)-pantothenate: step 4/5. Functionally, reversibly transfers an adenylyl group from ATP to 4'-phosphopantetheine, yielding dephospho-CoA (dPCoA) and pyrophosphate. The polypeptide is Phosphopantetheine adenylyltransferase (Enterobacter sp. (strain 638)).